Consider the following 63-residue polypeptide: MAVPKKRTSMSKKRIRKNLWKKKTYFSIVQSYSLAKSRSFSGVSEHPKPKGFSRQQTNNRVLG.

The tract at residues 38–63 (RSFSGVSEHPKPKGFSRQQTNNRVLG) is disordered. Over residues 53 to 63 (SRQQTNNRVLG) the composition is skewed to polar residues.

This sequence belongs to the bacterial ribosomal protein bL32 family.

The protein localises to the plastid. It localises to the chloroplast. This is Large ribosomal subunit protein bL32c (rpl32) from Oryza sativa (Rice).